The sequence spans 120 residues: BolA-like protein 2 (120 aa).

The protein belongs to the BolA/IbaG family. As to quaternary structure, interacts with FRA1, GRX3 and GRX4.

It localises to the cytoplasm. Its subcellular location is the nucleus. Its function is as follows. Involved in the regulation of the iron regulon in response to decreased mitochondrial iron-sulfur cluster synthesis. May be involved in mitochondrial organization and biogenesis. This is BolA-like protein 2 (BOL2) from Saccharomyces cerevisiae (strain ATCC 204508 / S288c) (Baker's yeast).